Consider the following 287-residue polypeptide: Shikimate kinase 3, chloroplastic (287 aa).

A chloroplast-targeting transit peptide spans 1 to 57; that stretch reads MDAGVGLRAKPGAWAGLGNPRRSSTARVPVRFAVEKFAQPLVLGSDRRSCGAKLKVS. 98 to 105 is a binding site for ATP; it reads GMMGSGKT. Threonine 105 contributes to the Mg(2+) binding site. Substrate is bound by residues aspartate 123, arginine 148, and glycine 170. Arginine 209 serves as a coordination point for ATP.

Belongs to the shikimate kinase family. It depends on Mg(2+) as a cofactor. As to expression, expressed in panicles.

Its subcellular location is the plastid. It is found in the chloroplast. The enzyme catalyses shikimate + ATP = 3-phosphoshikimate + ADP + H(+). It participates in metabolic intermediate biosynthesis; chorismate biosynthesis; chorismate from D-erythrose 4-phosphate and phosphoenolpyruvate: step 5/7. In terms of biological role, catalyzes the specific phosphorylation of the 3-hydroxyl group of shikimic acid using ATP as a cosubstrate. The sequence is that of Shikimate kinase 3, chloroplastic (SK3) from Oryza sativa subsp. japonica (Rice).